We begin with the raw amino-acid sequence, 193 residues long: dCTP deaminase (193 aa).

Residues 110–115 (RSSLAR), aspartate 128, 136–138 (VLE), tyrosine 171, lysine 178, and glutamine 182 contribute to the dCTP site. Catalysis depends on glutamate 138, which acts as the Proton donor/acceptor. Positions 169-193 (RPYNRRQDAKYRDQQGAVASRIDKD) are disordered.

The protein belongs to the dCTP deaminase family. In terms of assembly, homotrimer.

The catalysed reaction is dCTP + H2O + H(+) = dUTP + NH4(+). It functions in the pathway pyrimidine metabolism; dUMP biosynthesis; dUMP from dCTP (dUTP route): step 1/2. Functionally, catalyzes the deamination of dCTP to dUTP. This chain is dCTP deaminase, found in Citrobacter koseri (strain ATCC BAA-895 / CDC 4225-83 / SGSC4696).